Consider the following 160-residue polypeptide: Nitrate reductase [NADH] (160 aa).

T37 is an FAD binding site.

This sequence belongs to the nitrate reductase family. Homodimer. The cofactor is FAD. Heme serves as cofactor. It depends on Mo-molybdopterin as a cofactor.

It carries out the reaction nitrite + NAD(+) + H2O = nitrate + NADH + H(+). Its function is as follows. Nitrate reductase is a key enzyme involved in the first step of nitrate assimilation in plants, fungi and bacteria. The chain is Nitrate reductase [NADH] (NIA) from Lotus tetragonolobus (Winged pea).